Reading from the N-terminus, the 381-residue chain is GDP-mannose transporter (381 aa).

Residues 1-40 (MADDKKTNDYTVEMDKLDQGSKNFEAPLPPVQPRSAPNAQ) are Cytoplasmic-facing. Residues 41–61 (LANNPILPVLAYCGSSIMMTV) form a helical membrane-spanning segment. The Lumenal segment spans residues 62 to 71 (MNKYVLSGTD). A helical membrane pass occupies residues 72–92 (FNLNFLLLCVQSIVCIVAIQT). Residues 93 to 110 (CKASKLITYRDFNADEAK) lie on the Cytoplasmic side of the membrane. Residues 111-127 (KWFPITLLLIGMIYTGS) form a helical membrane-spanning segment. Residues 128–134 (KALQFLS) lie on the Lumenal side of the membrane. The helical transmembrane segment at 135–151 (IPVYTIFKNLTIILIAY) threads the bilayer. Residues 152 to 160 (GEVLWFGGS) are Cytoplasmic-facing. Residues 161–182 (VTGLTLFSFGLMVLSSIIAAWA) form a helical membrane-spanning segment. The Lumenal portion of the chain corresponds to 183–200 (DIKHAVESSGDATAKVST). A helical membrane pass occupies residues 201–221 (LNAGYIWMLINCLCTSSYVLG). Over 222-233 (MRKRIKLTNFKD) the chain is Cytoplasmic. The helical transmembrane segment at 234 to 254 (FDTMFYNNLLSIPVLLVLTFL) threads the bilayer. At 255 to 274 (MEDWSSANITRNFPPADRNG) the chain is on the lumenal side. The N-linked (GlcNAc...) asparagine glycan is linked to asparagine 262. A helical membrane pass occupies residues 275–295 (IMFAMILSGLSSVFISYTSAW). At 296–303 (CVRVTSST) the chain is on the cytoplasmic side. A helical membrane pass occupies residues 304–324 (TYSMVGALNKLPIAVSGLIFF). The Lumenal portion of the chain corresponds to 325 to 327 (DAP). The chain crosses the membrane as a helical span at residues 328-348 (VTFPSVSAIVVGFVSGIVYAV). Residues 349–381 (AKIKQNAKPKTGVLPTSNPVSASSQSMRDSLRS) lie on the Cytoplasmic side of the membrane. Residues 362-381 (LPTSNPVSASSQSMRDSLRS) are disordered.

This sequence belongs to the TPT transporter family. SLC35D subfamily. Homooligomer.

It is found in the golgi apparatus membrane. The protein resides in the cytoplasmic vesicle membrane. The protein localises to the endoplasmic reticulum membrane. Involved in the import of GDP-mannose from the cytoplasm into the Golgi lumen. This is GDP-mannose transporter (gmt1) from Aspergillus clavatus (strain ATCC 1007 / CBS 513.65 / DSM 816 / NCTC 3887 / NRRL 1 / QM 1276 / 107).